A 599-amino-acid chain; its full sequence is Elongation factor 4 (599 aa).

The tr-type G domain maps to 5-187 (SHIRNFSIIA…HLVRVIPPPQ (183 aa)). GTP contacts are provided by residues 17-22 (DHGKST) and 134-137 (NKMD).

This sequence belongs to the TRAFAC class translation factor GTPase superfamily. Classic translation factor GTPase family. LepA subfamily.

Its subcellular location is the cell inner membrane. The catalysed reaction is GTP + H2O = GDP + phosphate + H(+). Functionally, required for accurate and efficient protein synthesis under certain stress conditions. May act as a fidelity factor of the translation reaction, by catalyzing a one-codon backward translocation of tRNAs on improperly translocated ribosomes. Back-translocation proceeds from a post-translocation (POST) complex to a pre-translocation (PRE) complex, thus giving elongation factor G a second chance to translocate the tRNAs correctly. Binds to ribosomes in a GTP-dependent manner. The chain is Elongation factor 4 from Azotobacter vinelandii (strain DJ / ATCC BAA-1303).